Here is a 160-residue protein sequence, read N- to C-terminus: Cyanate hydratase (160 aa).

Catalysis depends on residues arginine 100, glutamate 103, and serine 126.

It belongs to the cyanase family.

It carries out the reaction cyanate + hydrogencarbonate + 3 H(+) = NH4(+) + 2 CO2. Catalyzes the reaction of cyanate with bicarbonate to produce ammonia and carbon dioxide. This Arthroderma otae (strain ATCC MYA-4605 / CBS 113480) (Microsporum canis) protein is Cyanate hydratase.